The chain runs to 350 residues: FAD:protein FMN transferase (350 aa).

The N-terminal stretch at 1-19 is a signal peptide; sequence MKMTFCRAVCLAAAFLLMG. Cys-20 carries N-palmitoyl cysteine lipidation. Cys-20 carries the S-diacylglycerol cysteine lipid modification. FAD is bound by residues Met-41, Tyr-78, 119 to 121, and Asp-181; that span reads AMD. Residue Thr-184 participates in Mg(2+) binding. FAD contacts are provided by Glu-187 and Ile-272. Mg(2+) contacts are provided by Asp-298, Asp-301, and Thr-302.

It belongs to the ApbE family. In terms of assembly, homodimer. The cofactor is Mg(2+).

The protein resides in the cell inner membrane. The catalysed reaction is L-threonyl-[protein] + FAD = FMN-L-threonyl-[protein] + AMP + H(+). Functionally, flavin transferase that catalyzes the transfer of the FMN moiety of FAD and its covalent binding to the hydroxyl group of a threonine residue in a target flavoprotein such as NqrB and NqrC, two subunits of the NQR complex. This chain is FAD:protein FMN transferase, found in Salmonella typhimurium (strain LT2 / SGSC1412 / ATCC 700720).